The sequence spans 537 residues: Phosphoenolpyruvate carboxykinase (ATP) (537 aa).

Substrate contacts are provided by R61, Y195, and K201. Residues K201, H220, and 236 to 244 (GLSGTGKTT) contribute to the ATP site. K201 and H220 together coordinate Mn(2+). D257 is a Mn(2+) binding site. 3 residues coordinate ATP: E285, R323, and T448. Position 323 (R323) interacts with substrate.

The protein belongs to the phosphoenolpyruvate carboxykinase (ATP) family. Mn(2+) is required as a cofactor.

The protein resides in the cytoplasm. The catalysed reaction is oxaloacetate + ATP = phosphoenolpyruvate + ADP + CO2. Its pathway is carbohydrate biosynthesis; gluconeogenesis. Involved in the gluconeogenesis. Catalyzes the conversion of oxaloacetate (OAA) to phosphoenolpyruvate (PEP) through direct phosphoryl transfer between the nucleoside triphosphate and OAA. This chain is Phosphoenolpyruvate carboxykinase (ATP), found in Rhodopseudomonas palustris (strain TIE-1).